Here is a 363-residue protein sequence, read N- to C-terminus: Protein-arginine kinase (363 aa).

Positions 24 to 254 constitute a Phosphagen kinase C-terminal domain; it reads IVLSSRIRLA…AQLIEQERSA (231 aa). Residue 27-31 participates in ATP binding; it reads SSRIR. Phosphoarginine; by autocatalysis occurs at positions 29, 40, and 86. Residues histidine 92, arginine 125, and 176–180 each bind ATP; that span reads RASVM. Arginine 190 carries the phosphoarginine; by autocatalysis modification. ATP is bound at residue 207 to 212; the sequence is RGIYGE. Arginine 255, arginine 269, and arginine 272 each carry phosphoarginine; by autocatalysis. An RDXXRA motif of the pArg binding pocket involved in allosteric regulation motif is present at residues 337–342; it reads RDIRRA. Phosphoarginine; by autocatalysis is present on arginine 346.

This sequence belongs to the ATP:guanido phosphotransferase family. As to quaternary structure, interacts with CtsR in its autophosphorylated form. Interacts with McsA in nonstressed as well as in heat-stressed cells, whereas strongly interacts with ClpC only in nonstressed cells. Post-translationally, autophosphorylated on Arg residues. Phosphorylation on Arg-40 and Arg-86 are up-regulated upon stress conditions.

Its subcellular location is the cytoplasm. The catalysed reaction is L-arginyl-[protein] + ATP = N(omega)-phospho-L-arginyl-[protein] + ADP + H(+). Its activity is regulated as follows. Appears to be allosterically activated by the binding of pArg-containing polypeptides to the pArg-binding pocket localized in the C-terminal domain of McsB. The McsB kinase is inhibited in nonstressed cells by direct interaction with ClpC; upon heat exposure, the interaction of McsB with ClpC is dramatically decreased, leading to McsB release and activation during heat stress. Its kinase activity is counteracted by the protein-arginine-phosphatase YwlE in vivo. Requires McsA for full kinase activity. Its function is as follows. Catalyzes the specific phosphorylation of arginine residues in a large number of proteins. Is part of the bacterial stress response system, where it is involved in regulating the global heat shock repressor CtsR; phosphorylates arginine residues in the winged helix-turn-helix domain of CtsR, thereby preventing its binding to DNA and consequently inducing the expression of repressed genes. The transcriptional repressor HrcA, the chaperone GroEL, the unfoldase ClpC, together with several ribosomal subunits, represent other physiological targets of McsB under stress conditions. Protein arginine phosphorylation has a physiologically important role and is involved in the regulation of many critical cellular processes, such as protein homeostasis, motility, competence, and stringent and stress responses, by regulating gene expression and protein activity. Functions as an adapter whose kinase activity is required for ClpCP-mediated degradation of CtsR during heat stress. Is required for the delocalization of competence proteins from the cell poles, probably via a role in the degradation of anchor proteins. In Bacillus subtilis (strain 168), this protein is Protein-arginine kinase.